Here is a 514-residue protein sequence, read N- to C-terminus: Cytochrome P450 monooxygenase MO6277 (514 aa).

Residues L6–Y26 traverse the membrane as a helical segment. C457 contacts heme.

The protein belongs to the cytochrome P450 family. The cofactor is heme.

It localises to the membrane. It carries out the reaction polyporic acid + reduced [NADPH--hemoprotein reductase] + O2 = ascocorynin + oxidized [NADPH--hemoprotein reductase] + H2O + H(+). The protein operates within secondary metabolite biosynthesis. Cytochrome P450 monooxygenase that hydroxylates polyporic acid produced by the nonribosomal peptide synthetase acyN to produce the less toxic metabolite ascocorynin. The hydrophobic substrate polyporic acid might approach the active site from the membrane and, after hydroxylation into ascocorynin, leaves into the cytoplasm. MO6277 appears vital to avoid high-level accumulation of polyporic acid in the fungal membrane. The protein is Cytochrome P450 monooxygenase MO6277 of Ascocoryne sarcoides (Purple jellydisc fungus).